A 281-amino-acid chain; its full sequence is Probable endonuclease 4 (281 aa).

H78, H118, E149, D181, H184, H216, D229, H231, and E260 together coordinate Zn(2+).

Belongs to the AP endonuclease 2 family. Requires Zn(2+) as cofactor.

It catalyses the reaction Endonucleolytic cleavage to 5'-phosphooligonucleotide end-products.. In terms of biological role, endonuclease IV plays a role in DNA repair. It cleaves phosphodiester bonds at apurinic or apyrimidinic (AP) sites, generating a 3'-hydroxyl group and a 5'-terminal sugar phosphate. The protein is Probable endonuclease 4 of Thermoplasma acidophilum (strain ATCC 25905 / DSM 1728 / JCM 9062 / NBRC 15155 / AMRC-C165).